Reading from the N-terminus, the 92-residue chain is MKFEAVVRTELGKGASRRLRHAGKFPAVIYGGEAAAVAIELVHADVINQMDKPEFYETITLVIDGAEVKVKPQDVQRHAFKPKVEHMDFIRI.

Belongs to the bacterial ribosomal protein bL25 family. Part of the 50S ribosomal subunit; part of the 5S rRNA/L5/L18/L25 subcomplex. Contacts the 5S rRNA. Binds to the 5S rRNA independently of L5 and L18.

Functionally, this is one of the proteins that binds to the 5S RNA in the ribosome where it forms part of the central protuberance. The polypeptide is Large ribosomal subunit protein bL25 (Vibrio atlanticus (strain LGP32) (Vibrio splendidus (strain Mel32))).